The following is a 410-amino-acid chain: Elongation factor Tu, chloroplastic (410 aa).

The tr-type G domain maps to 10-215; sequence KPHINIGTIG…MVDKYFPTPE (206 aa). Residues 19-26 are G1; sequence GHVDHGKT. 19–26 contributes to the GTP binding site; that stretch reads GHVDHGKT. Position 26 (threonine 26) interacts with Mg(2+). A G2 region spans residues 61 to 65; it reads GITIN. The tract at residues 82–85 is G3; the sequence is DCPG. GTP contacts are provided by residues 82–86 and 137–140; these read DCPGH and NKAD. The tract at residues 137-140 is G4; the sequence is NKAD. The tract at residues 175–177 is G5; the sequence is SAL.

It belongs to the TRAFAC class translation factor GTPase superfamily. Classic translation factor GTPase family. EF-Tu/EF-1A subfamily.

The protein localises to the plastid. The protein resides in the chloroplast. It catalyses the reaction GTP + H2O = GDP + phosphate + H(+). Functionally, GTP hydrolase that promotes the GTP-dependent binding of aminoacyl-tRNA to the A-site of ribosomes during protein biosynthesis. This chain is Elongation factor Tu, chloroplastic (tufA), found in Cyanidium caldarium (Red alga).